The following is a 310-amino-acid chain: GPN-loop GTPase 2 (310 aa).

A2 is subject to N-acetylalanine. 19 to 24 (GSGKTT) serves as a coordination point for GTP. Residues 76–78 (GPN) carry the Gly-Pro-Asn (GPN)-loop; involved in dimer interface motif. A GTP-binding site is contributed by 178–181 (SKMD).

The protein belongs to the GPN-loop GTPase family. As to quaternary structure, heterodimers with GPN1 or GPN3. Binds to RNA polymerase II (RNAPII).

Small GTPase required for proper localization of RNA polymerase II and III (RNAPII and RNAPIII). May act at an RNAP assembly step prior to nuclear import. This is GPN-loop GTPase 2 from Rattus norvegicus (Rat).